Here is a 126-residue protein sequence, read N- to C-terminus: Fluoride-specific ion channel FluC 1 (126 aa).

4 consecutive transmembrane segments (helical) span residues 5-25 (FILAVAAGGSLGSVARYLVGI), 39-59 (TLFINITGSLLIGLFAGLFAI), 69-89 (IFLIVGICGGYTTFSTFSLDS), and 100-120 (AAGAYMIASVVLSVGALIAGI). G77 and T80 together coordinate Na(+).

This sequence belongs to the fluoride channel Fluc/FEX (TC 1.A.43) family.

Its subcellular location is the cell inner membrane. It catalyses the reaction fluoride(in) = fluoride(out). With respect to regulation, na(+) is not transported, but it plays an essential structural role and its presence is essential for fluoride channel function. In terms of biological role, fluoride-specific ion channel. Important for reducing fluoride concentration in the cell, thus reducing its toxicity. In Nitrobacter hamburgensis (strain DSM 10229 / NCIMB 13809 / X14), this protein is Fluoride-specific ion channel FluC 1.